The sequence spans 493 residues: MTQESSSSNHYVDESSFDNNNNNNNNGGEGSSNEILIRIPFLHDSVPALYAMFALASLFVLLATILSAHLIYKHLKYYTQPDHQRYIVRIVFMIPIYAIYSLLSLLLHNYQVYFALLRDCYEAYVLYMFFALCVSYGGGDKNLVTHFTSHPVMRLPMPLFFKFKPNEAFLQVCRMGMLQYVLVRPAVTLASAIFEIFGLYDEGSYAINRFYFYNAFIINVSVTVALYIVVLFYQAAAEELAPYKPLLKFTSIKIVVFFCFWQSIAISGMTNFGWIPTLDGWNSGEVSTGLQNFLICFEMFGVAILHQYAFPYELYRVRAFSAAPLIHRVEMGTVFKSVINSVSQKDMVKETVKSFKGTKITDGKTGLYSGLKDEVFNEFDIEEIEMGDFTSANDNNNFDDFDFSENNINSNNKDNNSSIYNDGASKKNHIGSAILAGGGGGGKKDNDLITDDDFFSLMNNDYANIDFSNFDQDALEEMNFDDDDDDMAFTARR.

Polar residues predominate over residues 1-10 (MTQESSSSNH). The tract at residues 1–25 (MTQESSSSNHYVDESSFDNNNNNNN) is disordered. The next 7 helical transmembrane spans lie at 46-66 (VPAL…ATIL), 87-107 (IVRI…SLLL), 119-139 (DCYE…YGGG), 180-200 (YVLV…FGLY), 212-232 (FYNA…VVLF), 254-274 (IVVF…NFGW), and 293-313 (FLIC…FPYE). Asparagine 415 and asparagine 416 each carry an N-linked (GlcNAc...) asparagine glycan.

This sequence belongs to the TMEM184 family.

The protein localises to the cell membrane. Its function is as follows. Probable transporter. The sequence is that of Transmembrane protein 184 homolog DDB_G0284525 (tmem184A) from Dictyostelium discoideum (Social amoeba).